Reading from the N-terminus, the 68-residue chain is Beta-defensin 1 (68 aa).

Positions 1-21 are cleaved as a signal peptide; that stretch reads MRTSYLLLFTLCLLLSEMASG. A propeptide spanning residues 22-32 is cleaved from the precursor; it reads DNFLTGLGHRS. Intrachain disulfides connect cysteine 37/cysteine 66, cysteine 44/cysteine 59, and cysteine 49/cysteine 67.

This sequence belongs to the beta-defensin family. In terms of assembly, monomer. Homodimer.

Its subcellular location is the secreted. The protein resides in the membrane. In terms of biological role, has bactericidal activity. May act as a ligand for C-C chemokine receptor CCR6. Positively regulates the sperm motility and bactericidal activity in a CCR6-dependent manner. Binds to CCR6 and triggers Ca2+ mobilization in the sperm which is important for its motility. The sequence is that of Beta-defensin 1 (DEFB1) from Cercopithecus erythrogaster (Red-bellied monkey).